Reading from the N-terminus, the 644-residue chain is Chaperone protein HscA (644 aa).

This sequence belongs to the heat shock protein 70 family.

Its function is as follows. Chaperone involved in the maturation of iron-sulfur cluster-containing proteins. Has a low intrinsic ATPase activity which is markedly stimulated by HscB. Involved in the maturation of IscU. This is Chaperone protein HscA from Yersinia pseudotuberculosis serotype I (strain IP32953).